The sequence spans 807 residues: Serine/threonine-protein kinase AfsK (807 aa).

Residues 16–272 (FEVLGRLGAG…QAQLAPHLFA (257 aa)) form the Protein kinase domain. ATP-binding positions include 22 to 30 (LGAGGMGLV) and K44. S71 bears the Phosphoserine; by autocatalysis mark. D138 serves as the catalytic Proton acceptor. T168 is modified (phosphothreonine; by autocatalysis). 2 disordered regions span residues 292-328 (MIER…HRLA) and 353-429 (AGPS…PSPA). The span at 297–315 (RGGRRTARRPPRPRPRRLR) shows a compositional bias: basic residues. The span at 353–363 (AGPSAAPDGGP) shows a compositional bias: low complexity.

It belongs to the protein kinase superfamily. Ser/Thr protein kinase family. As to quaternary structure, interacts (via the N-terminal kinase domain) with KbpA; the interaction prevents autophosphorylation of AfsK. Autophosphorylated mainly on threonine residues. Some phosphorylation on serine residues. Autophosphorylation on Thr-168 is the major site enhancing kinase activity towards AfsR, and is regulated though interaction with KbpA.

It catalyses the reaction L-seryl-[protein] + ATP = O-phospho-L-seryl-[protein] + ADP + H(+). The catalysed reaction is L-threonyl-[protein] + ATP = O-phospho-L-threonyl-[protein] + ADP + H(+). In terms of biological role, component of the AfsK/AfsR system involved in the response of aerial mycelium formation to glucose. This is Serine/threonine-protein kinase AfsK (afsK) from Streptomyces griseus.